The following is an 84-amino-acid chain: Putative membrane protein insertion efficiency factor (84 aa).

The protein belongs to the UPF0161 family.

The protein resides in the cell membrane. Its function is as follows. Could be involved in insertion of integral membrane proteins into the membrane. The chain is Putative membrane protein insertion efficiency factor from Staphylococcus carnosus (strain TM300).